Consider the following 226-residue polypeptide: uncharacterized protein (226 aa).

One can recognise an HTH cro/C1-type domain in the interval 168–226 (ISALRNKLGLTQTDLGKRINVDANVIRNIETGDLVAFNVQDPMVRSLAYALGIRTIKYQ). The H-T-H motif DNA-binding region spans 179-198 (QTDLGKRINVDANVIRNIET).

This is an uncharacterized protein from Acanthamoeba polyphaga mimivirus (APMV).